The primary structure comprises 231 residues: Small ribosomal subunit protein uS3 (231 aa).

One can recognise a KH type-2 domain in the interval 39–107 (IRELLHKELK…DVVINIVEIR (69 aa)).

It belongs to the universal ribosomal protein uS3 family. As to quaternary structure, part of the 30S ribosomal subunit. Forms a tight complex with proteins S10 and S14.

In terms of biological role, binds the lower part of the 30S subunit head. Binds mRNA in the 70S ribosome, positioning it for translation. The chain is Small ribosomal subunit protein uS3 from Nitrobacter hamburgensis (strain DSM 10229 / NCIMB 13809 / X14).